A 353-amino-acid polypeptide reads, in one-letter code: Keratocan (353 aa).

An N-terminal signal peptide occupies residues methionine 1 to threonine 21. An LRRNT domain is found at glutamate 34–alanine 72. 2 disulfides stabilise this stretch: cysteine 43/cysteine 49 and cysteine 47/cysteine 59. LRR repeat units follow at residues arginine 73–asparagine 94, histidine 97–leucine 118, arginine 123–valine 143, glycine 144–asparagine 165, asparagine 168–threonine 188, serine 194–alanine 214, asparagine 215–alanine 236, and lysine 239–glycine 259. Asparagine 94 is a glycosylation site (N-linked (GlcNAc...) (keratan sulfate) asparagine). Asparagine 168 carries N-linked (GlcNAc...) asparagine glycosylation. A glycan (N-linked (GlcNAc...) (keratan sulfate) asparagine) is linked at asparagine 223. The N-linked (GlcNAc...) (keratan sulfate) asparagine glycan is linked to asparagine 261. 2 LRR repeats span residues serine 264 to alanine 283 and histidine 284 to proline 305. Asparagine 299 is a glycosylation site (N-linked (GlcNAc...) asparagine). Residues cysteine 304 and cysteine 344 are joined by a disulfide bond.

This sequence belongs to the small leucine-rich proteoglycan (SLRP) family. SLRP class II subfamily. As to expression, cornea.

The protein localises to the secreted. Its subcellular location is the extracellular space. It localises to the extracellular matrix. Its function is as follows. Plays an important role in generating and maintaining a transparent matrix within the corneal stroma. The sequence is that of Keratocan (KERA) from Coturnix japonica (Japanese quail).